Reading from the N-terminus, the 134-residue chain is ATP synthase epsilon chain, chloroplastic (134 aa).

Belongs to the ATPase epsilon chain family. As to quaternary structure, F-type ATPases have 2 components, CF(1) - the catalytic core - and CF(0) - the membrane proton channel. CF(1) has five subunits: alpha(3), beta(3), gamma(1), delta(1), epsilon(1). CF(0) has three main subunits: a, b and c.

The protein resides in the plastid. The protein localises to the chloroplast thylakoid membrane. In terms of biological role, produces ATP from ADP in the presence of a proton gradient across the membrane. The polypeptide is ATP synthase epsilon chain, chloroplastic (Amborella trichopoda).